Consider the following 73-residue polypeptide: Large ribosomal subunit protein bL28 (73 aa).

The protein belongs to the bacterial ribosomal protein bL28 family.

The chain is Large ribosomal subunit protein bL28 from Anaeromyxobacter sp. (strain Fw109-5).